A 337-amino-acid polypeptide reads, in one-letter code: MQSIPIKNVGTNRLVDTFQREYYYLRLSVTDVCNFKCTYCLPSGYQPPVQKESFLSLDEIRRIVGAFAAMGTEKVRLTGGEPTLRKDFLAIVETISALEGIKKVALTTNGYRMEKDVERWKKAGVSSINVSVDSLDPRQFYSITGENKFHQVMKGIERAFEIGYEKIKVNSVLMKNLNDQEFDRFKNWVKDKPIQMRFIELMQTGEMDQFFNRYHLSGQILAEKLLKEGWILRQKDRTDGPAKVFSHPDYLGEIGLIMPYEKNFCASCNRLRVSAKGKLHLCLFGEEGVDLRDLLVSDEQQVILQSRLYAALQGKREHHLLAQGNSGIRTNLASIGG.

The Radical SAM core domain occupies 17–242; the sequence is TFQREYYYLR…RQKDRTDGPA (226 aa). R26 serves as a coordination point for GTP. Residues C33 and C37 each contribute to the [4Fe-4S] cluster site. Y39 provides a ligand contact to S-adenosyl-L-methionine. C40 serves as a coordination point for [4Fe-4S] cluster. Residue R76 participates in GTP binding. G80 contributes to the S-adenosyl-L-methionine binding site. T107 serves as a coordination point for GTP. S131 contributes to the S-adenosyl-L-methionine binding site. K168 lines the GTP pocket. M202 lines the S-adenosyl-L-methionine pocket. [4Fe-4S] cluster-binding residues include C265 and C268. Residue 270-272 participates in GTP binding; the sequence is RLR. C282 contributes to the [4Fe-4S] cluster binding site.

Belongs to the radical SAM superfamily. MoaA family. In terms of assembly, monomer and homodimer. It depends on [4Fe-4S] cluster as a cofactor.

It catalyses the reaction GTP + AH2 + S-adenosyl-L-methionine = (8S)-3',8-cyclo-7,8-dihydroguanosine 5'-triphosphate + 5'-deoxyadenosine + L-methionine + A + H(+). Its pathway is cofactor biosynthesis; molybdopterin biosynthesis. Its function is as follows. Catalyzes the cyclization of GTP to (8S)-3',8-cyclo-7,8-dihydroguanosine 5'-triphosphate. This Mannheimia succiniciproducens (strain KCTC 0769BP / MBEL55E) protein is GTP 3',8-cyclase.